We begin with the raw amino-acid sequence, 736 residues long: MSAPEPKITPELIASHGLKPDEYQRILDLIGREPTFTELGIFSAMWNEHCSYKSSRIHLKGLPTKAPWVLQGPGENAGVIDIGDNQAVVFKMESHNHPSYIEPYQGATTGVGGILRDVFTMGARPIACLNALSFGDPSHPKTRHLVSGVVAGVGGYGNSFGVPTVGGQTRFHTRYDGNILVNAMAVGLADSDKIFLAAASGVGMPIVYLGSKTGRDGMGGATMASAEFDEGSEEKRPTVQVGDPFAEKLLLEACLEIMAKDCVIAIQDMGAAGLTCSAVEMGAKGDLGVDLDLDAVPTRETGMTAYEMMLSESQERMLMVLKPEKEKEAEEIFRKWGLDFAIVGYTTPTKRFVVKHGGAVKADLPIKELGDEAPLYDRPHVPSPKLPVIHAREVNAPMPVPEALEKLLATPDLCSKRWVWEQYDHVIGGNTLQRPGGDAAVVRVEDGPKGLALTVDVTPRYCEADPYEGGKQAVAEAYRNITAVGGKPLAITDNLNFGNPERPEIMGQLVGCLKGISEACIALDSPIVSGNVSLYNETSGRGILPTPSIGGVGLLDDFTKSATLAFKAEGEAILLIGETHGWLGQSVYLRDVCGREEGAPPPVDLACEKRHGDVVRGMIHAGTATAVHDLSDGGLLVALAEMAISGNIGASLDAPPDSTVAHAWWFGEDQGRYLVTVKEDDLLTVLSKLKSVGVPCTQIGTTGGHTLKIDGERAIDVKALRHAHEHWLPDYMAGKN.

Residue histidine 49 is part of the active site. ATP contacts are provided by tyrosine 52 and lysine 91. Position 93 (glutamate 93) interacts with Mg(2+). Residues 94-97 (SHNH) and arginine 116 each bind substrate. The Proton acceptor role is filled by histidine 95. Aspartate 117 serves as a coordination point for Mg(2+). Glutamine 240 is a substrate binding site. Aspartate 268 is a Mg(2+) binding site. 312 to 314 (ESQ) lines the substrate pocket. The ATP site is built by aspartate 493 and glycine 530. Asparagine 531 serves as a coordination point for Mg(2+). Serine 533 provides a ligand contact to substrate.

This sequence belongs to the FGAMS family. In terms of assembly, monomer. Part of the FGAM synthase complex composed of 1 PurL, 1 PurQ and 2 PurS subunits.

Its subcellular location is the cytoplasm. The enzyme catalyses N(2)-formyl-N(1)-(5-phospho-beta-D-ribosyl)glycinamide + L-glutamine + ATP + H2O = 2-formamido-N(1)-(5-O-phospho-beta-D-ribosyl)acetamidine + L-glutamate + ADP + phosphate + H(+). It participates in purine metabolism; IMP biosynthesis via de novo pathway; 5-amino-1-(5-phospho-D-ribosyl)imidazole from N(2)-formyl-N(1)-(5-phospho-D-ribosyl)glycinamide: step 1/2. Functionally, part of the phosphoribosylformylglycinamidine synthase complex involved in the purines biosynthetic pathway. Catalyzes the ATP-dependent conversion of formylglycinamide ribonucleotide (FGAR) and glutamine to yield formylglycinamidine ribonucleotide (FGAM) and glutamate. The FGAM synthase complex is composed of three subunits. PurQ produces an ammonia molecule by converting glutamine to glutamate. PurL transfers the ammonia molecule to FGAR to form FGAM in an ATP-dependent manner. PurS interacts with PurQ and PurL and is thought to assist in the transfer of the ammonia molecule from PurQ to PurL. This Rhodopseudomonas palustris (strain HaA2) protein is Phosphoribosylformylglycinamidine synthase subunit PurL.